Here is a 359-residue protein sequence, read N- to C-terminus: Peptide chain release factor 1 (359 aa).

Gln-235 is subject to N5-methylglutamine. Residues 282 to 307 show a composition bias toward basic and acidic residues; the sequence is RQRADSERSADRKSQVGSGDRSERIR. Positions 282–309 are disordered; it reads RQRADSERSADRKSQVGSGDRSERIRTY.

Belongs to the prokaryotic/mitochondrial release factor family. In terms of processing, methylated by PrmC. Methylation increases the termination efficiency of RF1.

The protein localises to the cytoplasm. Its function is as follows. Peptide chain release factor 1 directs the termination of translation in response to the peptide chain termination codons UAG and UAA. This chain is Peptide chain release factor 1, found in Allorhizobium ampelinum (strain ATCC BAA-846 / DSM 112012 / S4) (Agrobacterium vitis (strain S4)).